A 349-amino-acid chain; its full sequence is Phosphoribosylformylglycinamidine cyclo-ligase (349 aa).

The protein belongs to the AIR synthase family.

It is found in the cytoplasm. The enzyme catalyses 2-formamido-N(1)-(5-O-phospho-beta-D-ribosyl)acetamidine + ATP = 5-amino-1-(5-phospho-beta-D-ribosyl)imidazole + ADP + phosphate + H(+). The protein operates within purine metabolism; IMP biosynthesis via de novo pathway; 5-amino-1-(5-phospho-D-ribosyl)imidazole from N(2)-formyl-N(1)-(5-phospho-D-ribosyl)glycinamide: step 2/2. This chain is Phosphoribosylformylglycinamidine cyclo-ligase, found in Methanococcus vannielii (strain ATCC 35089 / DSM 1224 / JCM 13029 / OCM 148 / SB).